The primary structure comprises 264 residues: Carbonic anhydrase 7 (264 aa).

Residues 5-262 (HCWGYGQDDG…LKGRVVKASF (258 aa)) form the Alpha-carbonic anhydrase domain. His-66 serves as the catalytic Proton donor/acceptor. Zn(2+) is bound by residues His-96, His-98, and His-121. A substrate-binding site is contributed by 201-202 (TT).

This sequence belongs to the alpha-carbonic anhydrase family. It depends on Zn(2+) as a cofactor.

Its subcellular location is the cytoplasm. It carries out the reaction hydrogencarbonate + H(+) = CO2 + H2O. In terms of biological role, reversible hydration of carbon dioxide. The sequence is that of Carbonic anhydrase 7 (Ca7) from Mus musculus (Mouse).